A 437-amino-acid polypeptide reads, in one-letter code: Chromosomal replication initiator protein DnaA (437 aa).

The domain I, interacts with DnaA modulators stretch occupies residues Met-1 to Ile-69. The tract at residues Ile-69–Thr-100 is domain II. Residues Ile-101–Ala-315 are domain III, AAA+ region. Residues Gly-145, Gly-147, Lys-148, and Thr-149 each contribute to the ATP site. A domain IV, binds dsDNA region spans residues Asn-316–Asn-437.

The protein belongs to the DnaA family. As to quaternary structure, oligomerizes as a right-handed, spiral filament on DNA at oriC.

Its subcellular location is the cytoplasm. Its function is as follows. Plays an essential role in the initiation and regulation of chromosomal replication. ATP-DnaA binds to the origin of replication (oriC) to initiate formation of the DNA replication initiation complex once per cell cycle. Binds the DnaA box (a 9 base pair repeat at the origin) and separates the double-stranded (ds)DNA. Forms a right-handed helical filament on oriC DNA; dsDNA binds to the exterior of the filament while single-stranded (ss)DNA is stabiized in the filament's interior. The ATP-DnaA-oriC complex binds and stabilizes one strand of the AT-rich DNA unwinding element (DUE), permitting loading of DNA polymerase. After initiation quickly degrades to an ADP-DnaA complex that is not apt for DNA replication. Binds acidic phospholipids. The sequence is that of Chromosomal replication initiator protein DnaA from Wolinella succinogenes (strain ATCC 29543 / DSM 1740 / CCUG 13145 / JCM 31913 / LMG 7466 / NCTC 11488 / FDC 602W) (Vibrio succinogenes).